We begin with the raw amino-acid sequence, 152 residues long: Endoribonuclease YbeY (152 aa).

The Zn(2+) site is built by histidine 118, histidine 122, and histidine 128.

This sequence belongs to the endoribonuclease YbeY family. Requires Zn(2+) as cofactor.

It localises to the cytoplasm. Its function is as follows. Single strand-specific metallo-endoribonuclease involved in late-stage 70S ribosome quality control and in maturation of the 3' terminus of the 16S rRNA. This Pelotomaculum thermopropionicum (strain DSM 13744 / JCM 10971 / SI) protein is Endoribonuclease YbeY.